The following is an 89-amino-acid chain: Arminin 7519 (89 aa).

A signal peptide spans 1–18 (MRSTFAVLFLALIALTYS). The propeptide occupies 19 to 59 (KNYQDVKEEIKNEVENEILRDLGEDDDELDDNAQEAVNDAR). Position 86 is an alanine amide (Ala-86).

Belongs to the arminin family. As to expression, expressed in entodermal epithelium along the body column.

Its subcellular location is the secreted. The protein resides in the target cell membrane. Antimicrobial peptide with a broad-spectrum antimicrobial activity. Keeps its antibacterial activity under a wide range of salt concentrations that mimic physiological conditions of human blood, which is surprising, since Hydra is an obligate freshwater animal with nearly no salt tolerance. Does not affect red blood cells. The chain is Arminin 7519 from Hydra vulgaris (Hydra).